Reading from the N-terminus, the 765-residue chain is Dipeptidyl peptidase 4 (765 aa).

The Cytoplasmic segment spans residues 1–6 (MKTPWK). A helical; Signal-anchor for type II membrane protein membrane pass occupies residues 7 to 29 (VLLGLLAIAALVTVITVPVVLLT). The Extracellular segment spans residues 30–765 (KGNDASTDSR…HFLKQCFSLL (736 aa)). N-linked (GlcNAc...) asparagine glycosylation is found at Asn-84, Asn-91, Asn-149, Asn-218, Asn-228, Asn-271, Asn-280, Asn-320, and Asn-392. 3 disulfide bridges follow: Cys-384–Cys-393, Cys-443–Cys-446, and Cys-453–Cys-471. The N-linked (GlcNAc...) asparagine glycan is linked to Asn-495. Ser-629 serves as the catalytic Charge relay system. An intrachain disulfide couples Cys-648 to Cys-761. Residue Asn-684 is glycosylated (N-linked (GlcNAc...) asparagine). Active-site charge relay system residues include Asp-707 and His-739.

The protein belongs to the peptidase S9B family. DPPIV subfamily. Monomer. Homodimer. Heterodimer with Seprase (FAP). Requires homodimerization for optimal dipeptidyl peptidase activity and T-cell costimulation. Found in a membrane raft complex, at least composed of BCL10, CARD11, DPP4 and IKBKB. Associates with collagen. Interacts with PTPRC; the interaction is enhanced in an interleukin-12-dependent manner in activated lymphocytes. Interacts (via extracellular domain) with ADA; does not inhibit its dipeptidyl peptidase activity. Interacts with CAV1 (via the N-terminus); the interaction is direct. Interacts (via cytoplasmic tail) with CARD11 (via PDZ domain); its homodimerization is necessary for interaction with CARD11. Interacts with IGF2R; the interaction is direct. Interacts with GPC3. The soluble form (Dipeptidyl peptidase 4 soluble form also named SDPP) derives from the membrane form (Dipeptidyl peptidase 4 membrane form also named MDPP) by proteolytic processing. Post-translationally, N- and O-Glycosylated. In terms of processing, phosphorylated. Mannose 6-phosphate residues in the carbohydrate moiety are necessary for interaction with IGF2R in activated T-cells. Mannose 6-phosphorylation is induced during T-cell activation. Intestinal epithelium, dendritic cells and several immune system tissues.

It localises to the secreted. Its subcellular location is the cell membrane. It is found in the apical cell membrane. The protein resides in the cell projection. The protein localises to the invadopodium membrane. It localises to the lamellipodium membrane. Its subcellular location is the cell junction. It is found in the membrane raft. It carries out the reaction Release of an N-terminal dipeptide, Xaa-Yaa-|-Zaa-, from a polypeptide, preferentially when Yaa is Pro, provided Zaa is neither Pro nor hydroxyproline.. With respect to regulation, inhibited by GPC3 and diprotin A. Cell surface glycoprotein receptor involved in the costimulatory signal essential for T-cell receptor (TCR)-mediated T-cell activation. Acts as a positive regulator of T-cell coactivation, by binding at least ADA, CAV1, IGF2R, and PTPRC. Its binding to CAV1 and CARD11 induces T-cell proliferation and NF-kappa-B activation in a T-cell receptor/CD3-dependent manner. Its interaction with ADA also regulates lymphocyte-epithelial cell adhesion. In association with FAP is involved in the pericellular proteolysis of the extracellular matrix (ECM), the migration and invasion of endothelial cells into the ECM. May be involved in the promotion of lymphatic endothelial cells adhesion, migration and tube formation. When overexpressed, enhanced cell proliferation, a process inhibited by GPC3. Also acts as a serine exopeptidase with a dipeptidyl peptidase activity that regulates various physiological processes by cleaving peptides in the circulation, including many chemokines, mitogenic growth factors, neuropeptides and peptide hormones. Removes N-terminal dipeptides sequentially from polypeptides having unsubstituted N-termini provided that the penultimate residue is proline. The sequence is that of Dipeptidyl peptidase 4 (DPP4) from Bos taurus (Bovine).